The sequence spans 188 residues: ATP synthase subunit b (188 aa).

A helical transmembrane segment spans residues 19-39 (VYVLGATIVSFLILFLFITYF).

Belongs to the ATPase B chain family. F-type ATPases have 2 components, F(1) - the catalytic core - and F(0) - the membrane proton channel. F(1) has five subunits: alpha(3), beta(3), gamma(1), delta(1), epsilon(1). F(0) has three main subunits: a(1), b(2) and c(10-14). The alpha and beta chains form an alternating ring which encloses part of the gamma chain. F(1) is attached to F(0) by a central stalk formed by the gamma and epsilon chains, while a peripheral stalk is formed by the delta and b chains.

It localises to the cell membrane. Functionally, f(1)F(0) ATP synthase produces ATP from ADP in the presence of a proton or sodium gradient. F-type ATPases consist of two structural domains, F(1) containing the extramembraneous catalytic core and F(0) containing the membrane proton channel, linked together by a central stalk and a peripheral stalk. During catalysis, ATP synthesis in the catalytic domain of F(1) is coupled via a rotary mechanism of the central stalk subunits to proton translocation. In terms of biological role, component of the F(0) channel, it forms part of the peripheral stalk, linking F(1) to F(0). In Mesomycoplasma hyopneumoniae (strain J / ATCC 25934 / NCTC 10110) (Mycoplasma hyopneumoniae), this protein is ATP synthase subunit b.